Reading from the N-terminus, the 532-residue chain is Cyclin-L1 (532 aa).

Cyclin-like stretches follow at residues Glu94–Lys196 and Lys209–Arg293. Thr331 is subject to Phosphothreonine. The disordered stretch occupies residues Pro332–Arg532. 2 positions are modified to phosphoserine: Ser341 and Ser344. Residues Lys345 and Lys353 each participate in a glycyl lysine isopeptide (Lys-Gly) (interchain with G-Cter in SUMO2) cross-link. The span at Ser348 to Ser358 shows a compositional bias: basic and acidic residues. Phosphoserine occurs at positions 358 and 361. Basic and acidic residues predominate over residues Val367–Gln376. Lys368 participates in a covalent cross-link: Glycyl lysine isopeptide (Lys-Gly) (interchain with G-Cter in SUMO2). Residue Ser380 is modified to Phosphoserine. Basic residues-rich tracts occupy residues Asp388–Arg424, Arg444–His458, Ser466–Ser482, and Lys492–Arg504. Residues Arg396 to Ser438 are RS. Phosphoserine is present on Ser451. Basic and acidic residues predominate over residues Arg505–Ser514. Basic residues predominate over residues His515–Arg532.

The protein belongs to the cyclin family. Cyclin L subfamily. In terms of assembly, interacts with POLR2A via its hyperphosphorylated C-terminal domain (CTD). Interacts with CDK11A, CDK11B, CDK12 and CDK13. May form a ternary complex with CDK11B and casein kinase II (CKII). Interacts with pre-mRNA-splicing factors, including at least SRSF1, SRSF2 and SRSF7/SLU7. Widely expressed (at protein level).

The protein localises to the nucleus speckle. The protein resides in the nucleus. Its subcellular location is the nucleoplasm. It is found in the cytoplasm. Involved in pre-mRNA splicing. Functions in association with cyclin-dependent kinases (CDKs). May play a role in the regulation of RNA polymerase II (pol II). Inhibited by the CDK-specific inhibitor CDKN1A/p21. This Mus musculus (Mouse) protein is Cyclin-L1 (Ccnl1).